Here is a 659-residue protein sequence, read N- to C-terminus: mRNA export factor ICP27 homolog (659 aa).

Cysteine 130, histidine 266, cysteine 268, and cysteine 273 together coordinate Zn(2+). The segment at 130–273 (CMMSNGERPP…CEHACNDNAC (144 aa)) adopts a CHC2-type zinc-finger fold. The interval 317-659 (GSFDDSRSAT…GEDGESDMTL (343 aa)) is disordered. The segment covering 324–336 (SATSGDGSSCSSA) has biased composition (low complexity). Over residues 354 to 365 (SDQTDTSNNGTV) the composition is skewed to polar residues. Residues 387-397 (SPLDRPNDYHY) are compositionally biased toward basic and acidic residues. Low complexity predominate over residues 413–427 (GSGSSSTEAVSTASA). The segment covering 483-499 (SPERRSSEERSSSDQRR) has biased composition (basic and acidic residues). The span at 503 to 513 (LSRSASATSGG) shows a compositional bias: polar residues. Low complexity predominate over residues 553–575 (SRSNTPPSSPSKPDSAPAASASP). Positions 598-610 (ESVRVSERFETGD) are enriched in basic and acidic residues. Acidic residues-rich tracts occupy residues 617 to 628 (ETEDESDDEDDQ) and 646 to 659 (SETDGEDGESDMTL).

It belongs to the HHV-1 ICP27 protein family.

It localises to the virion tegument. The protein localises to the virion. The protein resides in the host nucleus. It is found in the host cytoplasm. Its function is as follows. Immediate early (EI) protein that plays many roles during productive infection including regulation of viral gene expression and nuclear export of intronless viral RNAs. The polypeptide is mRNA export factor ICP27 homolog (Elephantid herpesvirus 1 (isolate Asian elephant/Berlin/Kiba/1998) (EIHV-1)).